The sequence spans 159 residues: ATP synthase subunit b 1 (159 aa).

The chain crosses the membrane as a helical span at residues 5 to 25; sequence FWAFIGLILFLALLFYFKVPA.

This sequence belongs to the ATPase B chain family. As to quaternary structure, F-type ATPases have 2 components, F(1) - the catalytic core - and F(0) - the membrane proton channel. F(1) has five subunits: alpha(3), beta(3), gamma(1), delta(1), epsilon(1). F(0) has three main subunits: a(1), b(2) and c(10-14). The alpha and beta chains form an alternating ring which encloses part of the gamma chain. F(1) is attached to F(0) by a central stalk formed by the gamma and epsilon chains, while a peripheral stalk is formed by the delta and b chains.

It localises to the cell inner membrane. In terms of biological role, f(1)F(0) ATP synthase produces ATP from ADP in the presence of a proton or sodium gradient. F-type ATPases consist of two structural domains, F(1) containing the extramembraneous catalytic core and F(0) containing the membrane proton channel, linked together by a central stalk and a peripheral stalk. During catalysis, ATP synthesis in the catalytic domain of F(1) is coupled via a rotary mechanism of the central stalk subunits to proton translocation. Component of the F(0) channel, it forms part of the peripheral stalk, linking F(1) to F(0). The chain is ATP synthase subunit b 1 from Bartonella bacilliformis (strain ATCC 35685 / KC583 / Herrer 020/F12,63).